Consider the following 504-residue polypeptide: ATP-dependent rRNA helicase RRP3 (504 aa).

Residues 34-62 (ASASSAASTKESLPVSETISISTSETPVS) are compositionally biased toward low complexity. Positions 34–99 (ASASSAASTK…SSSSPPSVQS (66 aa)) are disordered. Residues 68 to 79 (SNKEDLSTKKDQ) show a composition bias toward basic and acidic residues. Over residues 80 to 99 (SSASSSSSTSSSSSPPSVQS) the composition is skewed to low complexity. Residues 98–126 (QSFTEFDLVPELLESIQSLKYTQPTPIQA) carry the Q motif motif. Residues 129-301 (IPHALQGKDI…RSLNSPVQVE (173 aa)) enclose the Helicase ATP-binding domain. 142 to 149 (AETGSGKT) is an ATP binding site. Positions 248 to 251 (DEVD) match the DEAD box motif. Residues 327–471 (RLIQIVNLDS…DLPLDEMQGL (145 aa)) form the Helicase C-terminal domain.

The protein belongs to the DEAD box helicase family. DDX47/RRP3 subfamily. In terms of assembly, interacts with the SSU processome.

The protein resides in the nucleus. The enzyme catalyses ATP + H2O = ADP + phosphate + H(+). In terms of biological role, ATP-dependent rRNA helicase required for pre-ribosomal RNA processing. Involved in the maturation of the 35S-pre-rRNA and to its cleavage to mature 18S rRNA. The protein is ATP-dependent rRNA helicase RRP3 of Lodderomyces elongisporus (strain ATCC 11503 / CBS 2605 / JCM 1781 / NBRC 1676 / NRRL YB-4239) (Yeast).